A 184-amino-acid chain; its full sequence is Photosystem I assembly protein Ycf4 (184 aa).

A run of 2 helical transmembrane segments spans residues 22-42 (FCWA…GTSS) and 57-77 (IIFF…LFIS).

This sequence belongs to the Ycf4 family.

The protein resides in the plastid. It is found in the chloroplast thylakoid membrane. Its function is as follows. Seems to be required for the assembly of the photosystem I complex. The polypeptide is Photosystem I assembly protein Ycf4 (Draba nemorosa (Woodland whitlowgrass)).